Here is a 221-residue protein sequence, read N- to C-terminus: Carbonic anhydrase (221 aa).

Positions 38, 40, 99, and 102 each coordinate Zn(2+).

It belongs to the beta-class carbonic anhydrase family. Zn(2+) serves as cofactor.

It catalyses the reaction hydrogencarbonate + H(+) = CO2 + H2O. The polypeptide is Carbonic anhydrase (cynT) (Helicobacter pylori (strain J99 / ATCC 700824) (Campylobacter pylori J99)).